Consider the following 91-residue polypeptide: UPF0223 protein SACOL1106 (91 aa).

This sequence belongs to the UPF0223 family.

This chain is UPF0223 protein SACOL1106, found in Staphylococcus aureus (strain COL).